Consider the following 442-residue polypeptide: 2-oxoisovalerate dehydrogenase subunit alpha, mitochondrial (442 aa).

The N-terminal 42 residues, 1 to 42 (MSAAKIWRPSRGLRQAALLLLGRSGVRGLARSHPSRQQQQQF), are a transit peptide targeting the mitochondrion. The segment at 30 to 50 (ARSHPSRQQQQQFPSLDDKPQ) is disordered. The thiamine diphosphate site is built by tyrosine 155 and arginine 156. Serine 203 is a K(+) binding site. Residue serine 204 coordinates thiamine diphosphate. Residues proline 205, threonine 208, and glutamine 209 each contribute to the K(+) site. Mg(2+) is bound at residue glutamate 235. The thiamine diphosphate site is built by glycine 236, alanine 237, and arginine 262. Mg(2+)-binding residues include asparagine 264 and tyrosine 266. Position 333 (histidine 333) interacts with thiamine diphosphate. A Phosphoserine; by BCKDK modification is found at serine 334. Phosphothreonine is present on threonine 335. Residues serine 336 and serine 344 each carry the phosphoserine modification. An N6-acetyllysine; alternate modification is found at lysine 353. N6-succinyllysine; alternate is present on lysine 353. At lysine 377 the chain carries N6-succinyllysine.

It belongs to the BCKDHA family. In terms of assembly, heterotetramer of 2 alpha/BCKDHA and 2 beta chains/BCKDHB that forms the branched-chain alpha-keto acid decarboxylase (E1) component of the BCKD complex. The branched-chain alpha-ketoacid dehydrogenase is a large complex composed of three major building blocks E1, E2 and E3. It is organized around E2, a 24-meric cubic core composed of DBT, to which are associated 6 to 12 copies of E1, and approximately 6 copies of the dehydrogenase E3, a DLD dimer. Interacts with PPM1K. It depends on thiamine diphosphate as a cofactor. Mg(2+) is required as a cofactor. In terms of processing, phosphorylated at Ser-334 by BCKDK and dephosphorylated by protein phosphatase PPM1K.

Its subcellular location is the mitochondrion matrix. The catalysed reaction is N(6)-[(R)-lipoyl]-L-lysyl-[protein] + 3-methyl-2-oxobutanoate + H(+) = N(6)-[(R)-S(8)-2-methylpropanoyldihydrolipoyl]-L-lysyl-[protein] + CO2. Functionally, together with BCKDHB forms the heterotetrameric E1 subunit of the mitochondrial branched-chain alpha-ketoacid dehydrogenase (BCKD) complex. The BCKD complex catalyzes the multi-step oxidative decarboxylation of alpha-ketoacids derived from the branched-chain amino-acids valine, leucine and isoleucine producing CO2 and acyl-CoA which is subsequently utilized to produce energy. The E1 subunit catalyzes the first step with the decarboxylation of the alpha-ketoacid forming an enzyme-product intermediate. A reductive acylation mediated by the lipoylamide cofactor of E2 extracts the acyl group from the E1 active site for the next step of the reaction. The polypeptide is 2-oxoisovalerate dehydrogenase subunit alpha, mitochondrial (Mus musculus (Mouse)).